The chain runs to 430 residues: Isocitrate dehydrogenase [NADP], mitochondrial (430 aa).

A mitochondrion-targeting transit peptide spans 1–27 (MIRASAIQRTAMLLRQLRGFSTSATLA). Residues 101–103 (TIT) and arginine 108 each bind NADP(+). Threonine 103 contributes to the substrate binding site. Residues 120-126 (SPNGTIR), arginine 135, and arginine 158 contribute to the substrate site. Residue aspartate 277 coordinates Mn(2+). Lysine 285 contacts NADP(+). A Mn(2+)-binding site is contributed by aspartate 300. NADP(+) contacts are provided by residues 335–340 (GTVTRH) and asparagine 353.

The protein belongs to the isocitrate and isopropylmalate dehydrogenases family. As to quaternary structure, homodimer. Mg(2+) is required as a cofactor. The cofactor is Mn(2+).

It is found in the mitochondrion. The enzyme catalyses D-threo-isocitrate + NADP(+) = 2-oxoglutarate + CO2 + NADPH. Functionally, mitochondrial IDP1 may regulate flux through the tricarboxylic acid cycle and respiration. Its probably critical function is the production of NADPH. The protein is Isocitrate dehydrogenase [NADP], mitochondrial (IDP1) of Candida tropicalis (Yeast).